The chain runs to 394 residues: Protein TsgA homolog (394 aa).

A run of 12 helical transmembrane segments spans residues 11 to 31, 51 to 71, 76 to 96, 101 to 121, 134 to 154, 162 to 182, 206 to 226, 251 to 271, 274 to 294, 302 to 322, 334 to 354, and 363 to 383; these read WISY…GMVM, FLNA…EIIP, LMFG…GKSL, LCMF…TFLI, LLFT…VAAM, WYWV…LTLF, IGVL…LGFI, FWTS…FFDL, IVTI…STDN, IMAL…LGSL, FILT…GPIV, and LTTA…LGFV.

It belongs to the major facilitator superfamily. TsgA family.

The protein localises to the cell inner membrane. This is Protein TsgA homolog from Serratia proteamaculans (strain 568).